The primary structure comprises 79 residues: Acyl carrier protein (79 aa).

The 76-residue stretch at 2–77 (SDVLERVRKI…DAVKFIQERL (76 aa)) folds into the Carrier domain. An O-(pantetheine 4'-phosphoryl)serine modification is found at Ser-37.

Belongs to the acyl carrier protein (ACP) family. Post-translationally, 4'-phosphopantetheine is transferred from CoA to a specific serine of apo-ACP by AcpS. This modification is essential for activity because fatty acids are bound in thioester linkage to the sulfhydryl of the prosthetic group.

The protein resides in the cytoplasm. The protein operates within lipid metabolism; fatty acid biosynthesis. Functionally, carrier of the growing fatty acid chain in fatty acid biosynthesis. The sequence is that of Acyl carrier protein from Phenylobacterium zucineum (strain HLK1).